Reading from the N-terminus, the 283-residue chain is Bifunctional protein FolD (283 aa).

NADP(+)-binding positions include 164–166 and S189; that span reads GRS.

This sequence belongs to the tetrahydrofolate dehydrogenase/cyclohydrolase family. As to quaternary structure, homodimer.

It catalyses the reaction (6R)-5,10-methylene-5,6,7,8-tetrahydrofolate + NADP(+) = (6R)-5,10-methenyltetrahydrofolate + NADPH. The enzyme catalyses (6R)-5,10-methenyltetrahydrofolate + H2O = (6R)-10-formyltetrahydrofolate + H(+). The protein operates within one-carbon metabolism; tetrahydrofolate interconversion. Functionally, catalyzes the oxidation of 5,10-methylenetetrahydrofolate to 5,10-methenyltetrahydrofolate and then the hydrolysis of 5,10-methenyltetrahydrofolate to 10-formyltetrahydrofolate. This chain is Bifunctional protein FolD, found in Lactobacillus acidophilus (strain ATCC 700396 / NCK56 / N2 / NCFM).